Reading from the N-terminus, the 530-residue chain is UPF0422 protein lpl2888 (530 aa).

Residues Met1–Ala19 form the signal peptide. A coiled-coil region spans residues Asp20–Thr66. Positions Leu50–Ala81 are disordered.

This sequence belongs to the UPF0422 family.

This chain is UPF0422 protein lpl2888, found in Legionella pneumophila (strain Lens).